Consider the following 426-residue polypeptide: Glutamate-1-semialdehyde 2,1-aminomutase (426 aa).

N6-(pyridoxal phosphate)lysine is present on K265.

Belongs to the class-III pyridoxal-phosphate-dependent aminotransferase family. HemL subfamily. As to quaternary structure, homodimer. Pyridoxal 5'-phosphate serves as cofactor.

Its subcellular location is the cytoplasm. The catalysed reaction is (S)-4-amino-5-oxopentanoate = 5-aminolevulinate. It participates in porphyrin-containing compound metabolism; protoporphyrin-IX biosynthesis; 5-aminolevulinate from L-glutamyl-tRNA(Glu): step 2/2. In Methylococcus capsulatus (strain ATCC 33009 / NCIMB 11132 / Bath), this protein is Glutamate-1-semialdehyde 2,1-aminomutase.